A 647-amino-acid polypeptide reads, in one-letter code: Sodium/nucleoside cotransporter 1 (647 aa).

The Cytoplasmic portion of the chain corresponds to 1 to 79 (MEDNTPRQRD…VRRFCREHTQ (79 aa)). The tract at residues 34–58 (EGRAPGSDSSPAEVGGGWSKAGPEH) is disordered. A helical transmembrane segment spans residues 80–103 (LFRWICTGLLCTAFAAFLLIACLL). Residues 104 to 108 (DFQRA) are Extracellular-facing. The chain crosses the membrane as a helical span at residues 109–127 (LALFVLFCVVLFFLAHSLL). Residues 128 to 146 (KRLLGPKLLRCVKPLRHPC) lie on the Cytoplasmic side of the membrane. A helical transmembrane segment spans residues 147-166 (LNLWFKRGLALAAFLGLVLW). Residues 167-177 (LVLDTAQRPEQ) lie on the Extracellular side of the membrane. A helical transmembrane segment spans residues 178-194 (LVSFGGICVFILLLFAG). Residues 195 to 200 (SKHHRA) lie on the Cytoplasmic side of the membrane. A helical membrane pass occupies residues 201–221 (VSWRAVSWGLGLQFALGLFVI). Over 222–260 (RTEPGFIAFQWLGDQIQIFLSYTEAGSSFVFGEALVKDV) the chain is Extracellular. The chain crosses the membrane as a helical span at residues 261-282 (FAFQVLPIIVFFSCAMSVLYYV). Over 283–293 (GLMQWVILKIS) the chain is Cytoplasmic. A helical membrane pass occupies residues 294–317 (WLMQATMGTTATETLSVAGNIFVS). Over 318–336 (QTEAPLLIRPYLADMTLSE) the chain is Extracellular. Residues 337-359 (IHVVMTGGYATIAGSLLGAYISF) traverse the membrane as a helical segment. Residues 360–365 (GIDAAS) are Cytoplasmic-facing. The chain crosses the membrane as a helical span at residues 366–385 (LIAASVMAAPCALALSKLVY). At 386 to 422 (PEVEESKFKREEGVKLTYGDAQNLLEAASSGAAMSVR) the chain is on the extracellular side. Residues 423–445 (VVTNIAANLIAFLAVLAFINAAL) form a helical membrane-spanning segment. Over 446–456 (SWLGDMVDVQG) the chain is Cytoplasmic. A helical transmembrane segment spans residues 457–478 (LSFQLICSYVLRPVAFLMGVAW). Topologically, residues 479–533 (EDCPVVAELLGMKLFLNEFVAYQELSGYKQRRLAGAEEWVGSRKQWISVRAEILT) are extracellular. A helical transmembrane segment spans residues 534 to 557 (TYALCGFANFSSIGIMLGGLTSMV). Residues 558–568 (PQRKGDFSQIV) are Cytoplasmic-facing. The helical transmembrane segment at 569 to 591 (LRALCTGACVSLVNACVAGILYV) threads the bilayer. Residues 592–647 (PRGAEVDCVSFLNTTLSSSSFEVYQCCRQFFQSTSLEFSPEALDNCCRFYNHTICV) are Extracellular-facing. N-linked (GlcNAc...) asparagine glycans are attached at residues Asn-604 and Asn-642.

It belongs to the concentrative nucleoside transporter (CNT) (TC 2.A.41) family. N-glycosylated. N-glycosylation is required for localization to the plasma membrane and the transporter activity.

Its subcellular location is the cell membrane. It localises to the apical cell membrane. It catalyses the reaction uridine(out) + Na(+)(out) = uridine(in) + Na(+)(in). The catalysed reaction is thymidine(out) + Na(+)(out) = thymidine(in) + Na(+)(in). It carries out the reaction cytidine(out) + Na(+)(out) = cytidine(in) + Na(+)(in). The enzyme catalyses adenosine(out) + Na(+)(out) = adenosine(in) + Na(+)(in). Due to its high apparent affinity but slow transport, adenosine could act as a negative regulator of pyrimidine transport under some conditions. Its function is as follows. Sodium and pyrimidine nucleoside symporter of the plasma membrane that imports uridine, thymidine and cytidine into cells by coupling their transport to the transmembrane sodium electrochemical gradient. Also transports adenosine, an atypical substrate transported with high apparent affinity, but low maximum velocity. Therefore, exhibits the transport characteristics of the nucleoside transport system cit or N2 subtype (N2/cit). Involved in renal nucleoside (re)absorption. In Sus scrofa (Pig), this protein is Sodium/nucleoside cotransporter 1 (SLC28A1).